The sequence spans 63 residues: Conotoxin p5a (63 aa).

Positions 1–19 (MRCLPVFVILLLLIPSAPC) are cleaved as a signal peptide. Residues 20–50 (VDAHPKTKDDMPLASFHDNAKGTLQRFWKKR) constitute a propeptide that is removed on maturation. 2 disulfide bridges follow: C52-C59 and C53-C60. L62 is modified (leucine amide).

Expressed by the venom duct.

It localises to the secreted. Functionally, in vivo, low levels of the peptide injected into male specimens of the Siamese fighting fish causes an immediate aggressive display in this fish in response to their reflection when placed in a mirrored aquarium; High levels of the peptide suppressed this behavior. No effect is observed when injected into mice. In Conus purpurascens (Purple cone), this protein is Conotoxin p5a.